The sequence spans 217 residues: 25 kDa ookinete surface antigen (217 aa).

Positions 1–16 (MNKLYSLFLFLFIQLS) are cleaved as a signal peptide. Positions 30–59 (CKKGFLIQMSGHLECKCENDLVLVNEETCE) constitute an EGF-like 1; truncated domain. EGF-like domains lie at 61-106 (KVLK…NVCI), 106-150 (ILNE…NKCS), and 153-193 (GETK…STCT). 9 cysteine pairs are disulfide-bonded: Cys65-Cys80, Cys74-Cys92, Cys94-Cys105, Cys110-Cys120, Cys115-Cys133, Cys135-Cys149, Cys157-Cys168, Cys161-Cys177, and Cys179-Cys192. Asn112 carries an N-linked (GlcNAc...) asparagine glycan. N-linked (GlcNAc...) asparagine glycosylation is found at Asn165 and Asn187. Ser196 is lipidated: GPI-anchor amidated serine. Positions 197 to 217 (VYNILNLSLIFVLFSVCFFIM) are cleaved as a propeptide — removed in mature form. Residue Asn202 is glycosylated (N-linked (GlcNAc...) asparagine).

It is found in the cell membrane. The chain is 25 kDa ookinete surface antigen from Plasmodium reichenowi.